The sequence spans 79 residues: Small ribosomal subunit protein bS18B (79 aa).

Belongs to the bacterial ribosomal protein bS18 family. In terms of assembly, part of the 30S ribosomal subunit. Forms a tight heterodimer with protein bS6.

In terms of biological role, binds as a heterodimer with protein bS6 to the central domain of the 16S rRNA, where it helps stabilize the platform of the 30S subunit. This Saccharopolyspora erythraea (strain ATCC 11635 / DSM 40517 / JCM 4748 / NBRC 13426 / NCIMB 8594 / NRRL 2338) protein is Small ribosomal subunit protein bS18B.